Reading from the N-terminus, the 175-residue chain is Alkyl hydroperoxide reductase AhpD (175 aa).

Cys-130 functions as the Proton donor in the catalytic mechanism. A disulfide bridge connects residues Cys-130 and Cys-133. Cys-133 serves as the catalytic Cysteine sulfenic acid (-SOH) intermediate.

Belongs to the AhpD family. Homotrimer.

It carries out the reaction N(6)-[(R)-dihydrolipoyl]-L-lysyl-[lipoyl-carrier protein] + a hydroperoxide = N(6)-[(R)-lipoyl]-L-lysyl-[lipoyl-carrier protein] + an alcohol + H2O. Antioxidant protein with alkyl hydroperoxidase activity. Required for the reduction of the AhpC active site cysteine residues and for the regeneration of the AhpC enzyme activity. The polypeptide is Alkyl hydroperoxide reductase AhpD (Mycobacteroides abscessus (strain ATCC 19977 / DSM 44196 / CCUG 20993 / CIP 104536 / JCM 13569 / NCTC 13031 / TMC 1543 / L948) (Mycobacterium abscessus)).